A 396-amino-acid chain; its full sequence is Septu protein PtuA (396 aa).

In terms of biological role, component of antiviral defense system Septu type I, composed of PtuA and PtuB. Expression of Septu type I in B.subtilis (strain BEST7003) confers resistance to phages SBSphiC and SBSphiJ. May be an ATPase. This Bacillus thuringiensis protein is Septu protein PtuA.